The sequence spans 283 residues: 4-diphosphocytidyl-2-C-methyl-D-erythritol kinase (283 aa).

Residue Lys9 is part of the active site. 93-103 serves as a coordination point for ATP; that stretch reads PIAAGLAGGSS. Residue Asp135 is part of the active site.

This sequence belongs to the GHMP kinase family. IspE subfamily.

It carries out the reaction 4-CDP-2-C-methyl-D-erythritol + ATP = 4-CDP-2-C-methyl-D-erythritol 2-phosphate + ADP + H(+). It functions in the pathway isoprenoid biosynthesis; isopentenyl diphosphate biosynthesis via DXP pathway; isopentenyl diphosphate from 1-deoxy-D-xylulose 5-phosphate: step 3/6. Its function is as follows. Catalyzes the phosphorylation of the position 2 hydroxy group of 4-diphosphocytidyl-2C-methyl-D-erythritol. The chain is 4-diphosphocytidyl-2-C-methyl-D-erythritol kinase from Macrococcus caseolyticus (strain JCSC5402) (Macrococcoides caseolyticum).